The primary structure comprises 317 residues: MATH domain and coiled-coil domain-containing protein At3g58240 (317 aa).

In terms of domain architecture, MATH spans 6 to 131 (DNKFTWVIKN…DGEVEIVAQI (126 aa)). Residues 254–305 (KLDWLEKKLDEVKEIKKKCERVTEMEKELHDLMNKHTNVSKLLEKEKLEIKN) adopt a coiled-coil conformation.

The chain is MATH domain and coiled-coil domain-containing protein At3g58240 from Arabidopsis thaliana (Mouse-ear cress).